Consider the following 237-residue polypeptide: Ribosomal RNA small subunit methyltransferase G (237 aa).

Residues G72, L77, 123–124, and R138 each bind S-adenosyl-L-methionine; that span reads AE. The disordered stretch occupies residues 210–237; sequence TALETGTKAAPSRSPRKPGGRKKRGRKR. Positions 223–237 are enriched in basic residues; it reads SPRKPGGRKKRGRKR.

This sequence belongs to the methyltransferase superfamily. RNA methyltransferase RsmG family.

The protein localises to the cytoplasm. Specifically methylates the N7 position of guanine in position 518 of 16S rRNA. In Thermobifida fusca (strain YX), this protein is Ribosomal RNA small subunit methyltransferase G.